Here is a 177-residue protein sequence, read N- to C-terminus: MADKRRPQRDLPQINERIRFPEIRVIDSDGAQLGIITPNEAMEIADERGLDLVLVSETADPPVCRIMDYGKYKFEQEKKAREAKKKQHTADVKEVKMRYKIDEHDYQVRINQAKRFLKAGDKVKATVNFRGREIQHAHLAKELLDRMATDLATEADIQQAPKREGRNMMMFLSPKKV.

It belongs to the IF-3 family. Monomer.

It localises to the cytoplasm. In terms of biological role, IF-3 binds to the 30S ribosomal subunit and shifts the equilibrium between 70S ribosomes and their 50S and 30S subunits in favor of the free subunits, thus enhancing the availability of 30S subunits on which protein synthesis initiation begins. This chain is Translation initiation factor IF-3, found in Synechocystis sp. (strain ATCC 27184 / PCC 6803 / Kazusa).